A 351-amino-acid chain; its full sequence is Protein-glutamate methylesterase/protein-glutamine glutaminase (351 aa).

Residues Thr8–Asp125 form the Response regulatory domain. Asp59 is subject to 4-aspartylphosphate. The CheB-type methylesterase domain maps to Pro151–Arg345. Active-site residues include Ser162, His188, and Asp287.

This sequence belongs to the CheB family. Post-translationally, phosphorylated by CheA. Phosphorylation of the N-terminal regulatory domain activates the methylesterase activity.

It is found in the cytoplasm. It carries out the reaction [protein]-L-glutamate 5-O-methyl ester + H2O = L-glutamyl-[protein] + methanol + H(+). The enzyme catalyses L-glutaminyl-[protein] + H2O = L-glutamyl-[protein] + NH4(+). Involved in chemotaxis. Part of a chemotaxis signal transduction system that modulates chemotaxis in response to various stimuli. Catalyzes the demethylation of specific methylglutamate residues introduced into the chemoreceptors (methyl-accepting chemotaxis proteins or MCP) by CheR. Also mediates the irreversible deamidation of specific glutamine residues to glutamic acid. This chain is Protein-glutamate methylesterase/protein-glutamine glutaminase, found in Gluconobacter oxydans (strain 621H) (Gluconobacter suboxydans).